Reading from the N-terminus, the 1036-residue chain is Phytosulfokine receptor 2 (1036 aa).

Residues 1–16 (MVIILLLVFFVGSSVS) form the signal peptide. N-linked (GlcNAc...) asparagine glycans are attached at residues N36 and N45. LRR repeat units follow at residues 89 to 111 (ELRV…ISKL), 113 to 136 (QLQV…SGLK), 137 to 159 (LIQS…GVFP), 160 to 182 (GLVM…LCSS), 185 to 207 (GIQV…YNCS), 209 to 231 (SIQQ…LYSI), 233 to 256 (ELEQ…SNLS), 257 to 279 (GLKS…FGNL), 281 to 303 (QLEH…LSQC), 305 to 326 (KLRV…NFTG), 329 to 351 (DLCV…LGHC), 353 to 375 (KMKI…FKNL), 377 to 398 (SLLF…MNVL), 403 to 423 (NLST…NNVT), 427 to 450 (NLAI…LNCK), 451 to 473 (KLEV…IGKM), and 475 to 498 (SLFY…TELK). N-linked (GlcNAc...) asparagine glycosylation is found at N142, N165, and N205. N-linked (GlcNAc...) asparagine glycans are attached at residues N251, N254, and N278. N-linked (GlcNAc...) asparagine glycans are attached at residues N313 and N323. N-linked (GlcNAc...) asparagine glycans are attached at residues N385, N403, and N421. N-linked (GlcNAc...) asparagine glycans are attached at residues N483, N504, N523, N549, and N571. LRR repeat units follow at residues 561–583 (ELHM…ISGL) and 585–606 (NLEV…SFQS). A helical transmembrane segment spans residues 680 to 700 (IVVLTISLAIGITLLLSVILL). At T751 the chain carries Phosphothreonine. The Protein kinase domain maps to 754-1025 (FSQANIIGCG…PLIEEVVTWL (272 aa)). Residues 760 to 768 (IGCGGFGLV) and K782 each bind ATP. 2 positions are modified to phosphotyrosine: Y827 and Y867. D880 (proton acceptor) is an active-site residue. Y922 bears the Phosphotyrosine mark. An LRR 20 repeat occupies 995–1020 (RTVLEMLEIACKCIDHEPRRRPLIEE).

This sequence belongs to the protein kinase superfamily. Ser/Thr protein kinase family.

Its subcellular location is the cell membrane. It carries out the reaction L-seryl-[protein] + ATP = O-phospho-L-seryl-[protein] + ADP + H(+). It catalyses the reaction L-threonyl-[protein] + ATP = O-phospho-L-threonyl-[protein] + ADP + H(+). Its function is as follows. Phytosulfokine receptor with a serine/threonine-protein kinase activity. The chain is Phytosulfokine receptor 2 (PSKR2) from Arabidopsis thaliana (Mouse-ear cress).